The following is a 466-amino-acid chain: MSLSLWQQCLARLQDELPATEFSMWIRPLQAELSDNTLALYAPNRFVLDWVRDKYLNNINGLLNAFCGADAPQLRFEVGTKPVTQTLKTPVHNVVAPTQTTTAQPQRVAPAARSGWDNVPAPAEPTYRSNVNVKHTFDNFVEGKSNQLARAAARQVADNPGGAYNPLFLYGGTGLGKTHLLHAVGNGIMARKPNAKVVYMHSERFVQDMVKALQNNAIEEFKRYYRSVDALLIDDIQFFANKERSQEEFFHTFNALLEGNQQIILTSDRYPKEINGVEDRLKSRFGWGLTVAIEPPELETRVAILMKKADENDIRLPGEVAFFIAKRLRSNVRELEGALNRVIANANFTGRAITIDFVREALRDLLALQEKLVTIDNIQKTVAEYYKIKIADLLSKRRSRSVARPRQMAMALAKELTNHSLPEIGDAFGGRDHTTVLHACRKIEQLREESHDIKEDFSNLIRTLSS.

Residues 1–86 form a domain I, interacts with DnaA modulators region; it reads MSLSLWQQCL…EVGTKPVTQT (86 aa). The tract at residues 86–129 is domain II; it reads TLKTPVHNVVAPTQTTTAQPQRVAPAARSGWDNVPAPAEPTYRS. The segment at 130–346 is domain III, AAA+ region; that stretch reads NVNVKHTFDN…GALNRVIANA (217 aa). ATP is bound by residues Gly174, Gly176, Lys177, and Thr178. Positions 347–466 are domain IV, binds dsDNA; sequence NFTGRAITID…FSNLIRTLSS (120 aa).

This sequence belongs to the DnaA family. Oligomerizes as a right-handed, spiral filament on DNA at oriC.

The protein resides in the cytoplasm. In terms of biological role, plays an essential role in the initiation and regulation of chromosomal replication. ATP-DnaA binds to the origin of replication (oriC) to initiate formation of the DNA replication initiation complex once per cell cycle. Binds the DnaA box (a 9 base pair repeat at the origin) and separates the double-stranded (ds)DNA. Forms a right-handed helical filament on oriC DNA; dsDNA binds to the exterior of the filament while single-stranded (ss)DNA is stabiized in the filament's interior. The ATP-DnaA-oriC complex binds and stabilizes one strand of the AT-rich DNA unwinding element (DUE), permitting loading of DNA polymerase. After initiation quickly degrades to an ADP-DnaA complex that is not apt for DNA replication. Binds acidic phospholipids. The polypeptide is Chromosomal replication initiator protein DnaA (Salmonella dublin (strain CT_02021853)).